A 246-amino-acid chain; its full sequence is YjeF N-terminal domain-containing 3 (246 aa).

Residues 24-234 (VATVETELLR…DIQKKYELNL (211 aa)) form the YjeF N-terminal domain.

In terms of assembly, interacts with apoa1a. Binds to high-density lipoprotein.

Its function is as follows. Accelerates cholesterol efflux from endothelial cells to high-density lipoprotein (HDL) and thereby regulates angiogenesis. Orchestrates hematopoietic stem and progenitor cell emergence from the hemogenic endothelium, a type of specialized endothelium manifesting hematopoietic potential. YJEFN3-mediated cholesterol efflux activates endothelial SREBF2, the master transcription factor for cholesterol biosynthesis, which in turn transactivates NOTCH and promotes hematopoietic stem and progenitor cell emergence. This Danio rerio (Zebrafish) protein is YjeF N-terminal domain-containing 3.